Reading from the N-terminus, the 1134-residue chain is DNA damage-binding protein 1 (1134 aa).

It belongs to the DDB1 family. Interacts with cdt-1 and cul-4. As to expression, expressed at high levels in the spermatheca of adult hermaphrodites.

It localises to the cytoplasm. Its subcellular location is the nucleus. Its pathway is protein modification; protein ubiquitination. Its function is as follows. Plays a role in DNA repair. May be a component of an E3 ubiquitin-protein ligase which promotes histone ubiquitination in response to UV irradiation. Histone ubiquitination may be important for subsequent DNA repair. Promotes the degradation of the replication licensing factor cdt-1 during S-phase, thereby preventing rereplication of DNA during a single round of cell division. The polypeptide is DNA damage-binding protein 1 (ddb-1) (Caenorhabditis elegans).